The sequence spans 389 residues: Probable inactive purple acid phosphatase 29 (389 aa).

The signal sequence occupies residues Met-1 to Ala-34. Asn-80 carries N-linked (GlcNAc...) asparagine glycosylation. Substrate is bound at residue Asn-136. Asn-136 is a Zn(2+) binding site. 2 N-linked (GlcNAc...) asparagine glycosylation sites follow: Asn-191 and Asn-267. His-303 contributes to the Zn(2+) binding site. His-303–His-305 is a substrate binding site. His-305 is a binding site for Fe cation. Asn-380 carries N-linked (GlcNAc...) asparagine glycosylation.

It belongs to the metallophosphoesterase superfamily. Purple acid phosphatase family. As to quaternary structure, homodimer. The cofactor is Fe cation. It depends on Zn(2+) as a cofactor. As to expression, expressed in roots, stems, leaves, flowers and siliques.

The protein resides in the secreted. This is Probable inactive purple acid phosphatase 29 (PAP29) from Arabidopsis thaliana (Mouse-ear cress).